The following is a 238-amino-acid chain: Pre-protein VI (238 aa).

The propeptide occupies 1–33 (MDAVNFSILAPRYGSHPMMSAWSGIGTSDMNGG). Positions 34–54 (AFNWGGIWSGIKNFGSNVKNW) are amphipathic alpha-helix essential for membrane lytic activity. Residues 36-53 (NWGGIWSGIKNFGSNVKN) form an involved in endosomal membrane lysis region. The tract at residues 48–74 (GSNVKNWGSRAWNSQTGKLLRQKLNDT) is interaction with hexon protein. The Nuclear export signal motif lies at 67 to 76 (LRQKLNDTKV). The short motif at 153–156 (PPSY) is the PPXY motif element. Residues 187–212 (TLELKPSDQPPPYSPQSSNMPVTAPV) are disordered. Positions 219-230 (GTLANIVGVGLS) match the Nuclear export signal motif. The interaction with hexon protein stretch occupies residues 221–227 (LANIVGV). The interval 228–238 (GLSNVKRRRCF) is binds to importin alpha/beta, involved in hexon nuclear import. Residues 233–236 (KRRR) carry the Nuclear localization signal motif.

The protein belongs to the adenoviridae protein VI family. Interacts with hexon protein; this interaction allows nuclear import of hexon trimers and possibly pre-capsid assembly. Interacts (via C-terminal NLS) with importin alpha/beta. In terms of assembly, interacts (via PPxY motif) with host NEDD4 ubiquitine ligase; this interaction might play a role in virus intracellular transport during entry. Part of a complex composed of the core-capsid bridging protein, the endosome lysis protein VI and the hexon-linking protein VIII; these interactions bridge the virus core to the capsid. Interacts with peripentonal hexons; this interaction stabilizes the capsid by gluing two peripentonal hexons together and joining them with an adjacent group-of-nine hexon. As to quaternary structure, heterodimer with the viral protease; disulfide-linked. Interacts with the viral protease. In terms of processing, ubiquitinated by Nedd4 following partial capsid disassembly; which might play a role in intracellular virus movement during entry. Contains the major nuclear import and export signals. Proteolytically removed during virion maturation. The processing of the C-terminus turns the precursor into a mature viral structural protein and abrogates its ability to promote hexon import and act as a potential chaperone protein.

It is found in the host nucleus. It localises to the host cytoplasm. The protein localises to the virion. Functionally, during virus assembly, promotes hexon trimers nuclear import through nuclear pore complexes via an importin alpha/beta-dependent mechanism. By analogy to herpesviruses capsid assembly, might act as a chaperone to promote the formation of the icosahedral capsid. Its function is as follows. Structural component of the virion that provides increased stability to the particle shell through its interaction with the core-capsid bridging protein and the hexon-linking protein VIII. Fibers shedding during virus entry into host cell allows the endosome lysis protein to be exposed as a membrane-lytic peptide. Exhibits pH-independent membrane fragmentation activity and probably mediates viral rapid escape from host endosome via organellar membrane lysis. It is not clear if it then remains partially associated with the capsid and involved in the intracellular microtubule-dependent transport of capsid to the nucleus, or if it is lost during endosomal penetration. In terms of biological role, cofactor that activates the viral protease. Binds to viral protease in a 1:1 ratio. In Canine adenovirus serotype 1 (strain CLL) (CAdV-1), this protein is Pre-protein VI.